The chain runs to 180 residues: MSRGRADTAGDCSKNGRRSRILHYLMAIYLLNGLPGGEYARFIKIARLLDVSPSTVSIMTRRLQMKGLVELIPNMGVRLTEQGLKILSNYLWKSAILEVLLARAGVDIDNCRGMGLRMAEGLSDEDAWILYKVLGEPKYCPHKKPIIPPDEINAENARQIALCCGISILQIPNNRLQPPS.

The HTH dtxR-type domain occupies 17–80 (RRSRILHYLM…LIPNMGVRLT (64 aa)).

Belongs to the DtxR/MntR family.

This is an uncharacterized protein from Aeropyrum pernix (strain ATCC 700893 / DSM 11879 / JCM 9820 / NBRC 100138 / K1).